The following is a 91-amino-acid chain: Acylphosphatase (91 aa).

The 87-residue stretch at 5-91 (RLTAWVRGHV…RGSFTGFEER (87 aa)) folds into the Acylphosphatase-like domain. Catalysis depends on residues Arg20 and Asn38.

This sequence belongs to the acylphosphatase family.

It catalyses the reaction an acyl phosphate + H2O = a carboxylate + phosphate + H(+). In Thermobifida fusca (strain YX), this protein is Acylphosphatase (acyP).